Consider the following 147-residue polypeptide: Endoribonuclease YbeY (147 aa).

Zn(2+)-binding residues include His111, His115, and Asp121.

It belongs to the endoribonuclease YbeY family. Zn(2+) serves as cofactor.

The protein resides in the cytoplasm. Functionally, single strand-specific metallo-endoribonuclease involved in late-stage 70S ribosome quality control and in maturation of the 3' terminus of the 16S rRNA. This Amoebophilus asiaticus (strain 5a2) protein is Endoribonuclease YbeY.